Consider the following 479-residue polypeptide: Sodium-coupled neutral amino acid transporter 5 (479 aa).

At 1 to 61 (MAISCAVGME…LDFEGKTSFG (61 aa)) the chain is on the cytoplasmic side. The chain crosses the membrane as a helical span at residues 62 to 84 (MSVFNLSNAIMGSGILGLAYAMA). Residues 85 to 97 (HTGVIFFLALLLC) are Extracellular-facing. A helical transmembrane segment spans residues 98–118 (IALLSSYSIHLLLTCASVVGI). At 119–135 (RAYEQLGQRAFGPAGKV) the chain is on the cytoplasmic side. Residues 136–156 (VVAIIICLHNVGAMSSYLFII) form a helical membrane-spanning segment. Residues 157–176 (KSELPLVIGTFLHMDPEGDW) lie on the Extracellular side of the membrane. Residues 177–197 (FLKGNLLIILVSLLIILPLAL) form a helical membrane-spanning segment. At 198–202 (MKHLG) the chain is on the cytoplasmic side. The chain crosses the membrane as a helical span at residues 203-223 (YLGYTSSLSLTCMLFFLISVI). Topologically, residues 224 to 264 (YKKFQIGCDVSHNDTVVEAEQAPLQAFNSSCEAELFTVDSQ) are extracellular. C231 and C254 are disulfide-bonded. N236 carries an N-linked (GlcNAc...) asparagine glycan. Residues 265–285 (MSYTVPIMAFAFVCHPEVLPI) traverse the membrane as a helical segment. Residues 286 to 302 (YTELCRPTQRRMQAVAN) are Cytoplasmic-facing. A helical membrane pass occupies residues 303–323 (MSIGAMFIMYGLTATFGYLTF). Topologically, residues 324–341 (YSTVKAEMLEMYTQEDML) are extracellular. Residues 342–362 (ILCVRLAVLLAVTLTVPVVLF) form a helical membrane-spanning segment. Over 363 to 383 (PIRRALQQLLFPSKAFSWLRH) the chain is Cytoplasmic. Residues 384–404 (VAIALILLILVNILVICVPTI) traverse the membrane as a helical segment. At 405 to 406 (RD) the chain is on the extracellular side. The helical transmembrane segment at 407–427 (IFGFIGSTSAPSLIFILPSVF) threads the bilayer. Residues 428–446 (YLRIVPTEVEPLFSWPKIQ) are Cytoplasmic-facing. A helical transmembrane segment spans residues 447-467 (ALCFGVLGVLFMAISLGFMFA). The Extracellular segment spans residues 468-479 (NWATGQSRMSGH).

This sequence belongs to the amino acid/polyamine transporter 2 family. Expressed in the ganglion cell layer and the nerve fiber layer (at protein level). Also expreseed in the cells of the inner nuclear layer and in the inner plexiform layer (at protein level). Expressed in Mueller and ganglion retinal cell.

The protein localises to the cell membrane. The catalysed reaction is L-glutamine(out) + Na(+)(out) + H(+)(in) = L-glutamine(in) + Na(+)(in) + H(+)(out). The enzyme catalyses L-serine(out) + Na(+)(out) + H(+)(in) = L-serine(in) + Na(+)(in) + H(+)(out). It catalyses the reaction L-alanine(out) + Na(+)(out) + H(+)(in) = L-alanine(in) + Na(+)(in) + H(+)(out). It carries out the reaction glycine(out) + Na(+)(out) + H(+)(in) = glycine(in) + Na(+)(in) + H(+)(out). The catalysed reaction is L-asparagine(out) + Na(+)(out) + H(+)(in) = L-asparagine(in) + Na(+)(in) + H(+)(out). The enzyme catalyses L-histidine(out) + Na(+)(out) + H(+)(in) = L-histidine(in) + Na(+)(in) + H(+)(out). It catalyses the reaction L-cysteine(out) + Na(+)(out) + H(+)(in) = L-cysteine(in) + Na(+)(in) + H(+)(out). Its activity is regulated as follows. Not inhibited by lithium. Partial allosteric regulation on ions sodium binding. Functionally, symporter that cotransports neutral amino acids and sodium ions, coupled to an H(+) antiporter activity. Releases L-glutamine and glycine from astroglial cells and may participate in the glutamate/GABA-L-glutamine cycle and the NMDA receptors activation. In addition, contributes significantly to L-glutamine uptake in retina, namely in ganglion and Mueller cells therefore, participates in the retinal glutamate-glutamine cycle. The transport activity is pH sensitive, Li(+) tolerant, bidirectional and associated with large uncoupled fluxes of protons. Moreover functions in both direction and is associated with large uncoupled fluxes of protons. The transport is electroneutral coupled to the cotransport of 1 Na(+) and the antiport of 1 H(+). May have a particular importance for modulation of net hepatic glutamine flux. This Mus musculus (Mouse) protein is Sodium-coupled neutral amino acid transporter 5.